A 425-amino-acid polypeptide reads, in one-letter code: MQQPPSQPQPGMGGPPPPPQGAAGQPPQWGAIPPPMPPHQYGAPPPQQPPAMWGQPPPQAHYGQVPPPQPYYAAPPPQAMPAPAAADEVKTLWIGDLQPWMDESYIYNCFAATGEVQSVKLIRDKQSGQLQGYGFVEFTSRAAADRILQTYNGQMMPNVEMVFRLNWASAGEKRDDTPDYTIFVGDLAADVTDYLLQETFRVHYPSVKGAKVVTDKMTMRSKGYGFVKFGDPTEQARAMTEMNGMLCSSRPMRIGPAANKKTTGVQERVPNAQGAQSENDPNNTTIFVGGLDPNVTEDVLKQVFAPYGEVVHVKIPVGKRCGFVQYVNRPSAEQALAVLQGTLIGGQNVRLSWGRSLSNKQPQHDSNQWGAGAGAGGYYGGYGQGYEAYGGYAQPQDPNMYGYGAYAGYPNYQQQQVAQQQPPQQ.

Pro residues predominate over residues 1-20 (MQQPPSQPQPGMGGPPPPPQ). The interval 1–82 (MQQPPSQPQP…AAPPPQAMPA (82 aa)) is disordered. Positions 21–31 (GAAGQPPQWGA) are enriched in low complexity. A compositionally biased stretch (pro residues) spans 32–80 (IPPPMPPHQYGAPPPQQPPAMWGQPPPQAHYGQVPPPQPYYAAPPPQAM). 3 RRM domains span residues 90–170 (KTLW…WASA), 180–259 (YTIF…PAAN), and 284–356 (TTIF…WGRS).

The protein belongs to the polyadenylate-binding RBP45 family. As to quaternary structure, interacts with RBP-P. Interacts with RAB5A.

The protein resides in the nucleus. It localises to the cytoplasm. Functionally, RNA-binding protein that binds to a cis-localization element or zipcode, within the 5'-CDS of prolamine RNA. Binds strongly to glutelin and prolamin mRNAs, particularly to 3'-UTR and zipcode RNA. Recognizes and binds to glutelin zipcode RNA, which is required for proper mRNA localization to cisternal endoplasmic reticulum. Recognizes and binds to prolamin zipcode RNA, which is required for proper mRNA localization to the protein body endoplasmic reticulum that delimits the prolamine intracisternal inclusion granules. Required for the correct localization of glutelin and prolamine mRNA in endosperm cells during grain development. RBP-L and RBP-P form a quaternary complex with the membrane trafficking factors NSF and RAB5A. This quaternay complex carries glutelin mRNAs for active transport on endosomes to the cortical endoplasmic reticulum membrane, and enables endosome-mediated glutelin mRNA transport in endosperm cells. This is RNA-binding protein L from Oryza sativa subsp. japonica (Rice).